Here is a 208-residue protein sequence, read N- to C-terminus: Uracil phosphoribosyltransferase (208 aa).

5-phospho-alpha-D-ribose 1-diphosphate-binding positions include Arg78, Arg103, and 130 to 138; that span reads DPMLATGVS. Residues Ile193 and 198–200 contribute to the uracil site; that span reads GDA. 5-phospho-alpha-D-ribose 1-diphosphate is bound at residue Asp199.

This sequence belongs to the UPRTase family. Mg(2+) is required as a cofactor.

The catalysed reaction is UMP + diphosphate = 5-phospho-alpha-D-ribose 1-diphosphate + uracil. Its pathway is pyrimidine metabolism; UMP biosynthesis via salvage pathway; UMP from uracil: step 1/1. Its activity is regulated as follows. Allosterically activated by GTP. Functionally, catalyzes the conversion of uracil and 5-phospho-alpha-D-ribose 1-diphosphate (PRPP) to UMP and diphosphate. The polypeptide is Uracil phosphoribosyltransferase (Thermosipho africanus (strain TCF52B)).